Here is a 179-residue protein sequence, read N- to C-terminus: Large ribosomal subunit protein uL5 (179 aa).

It belongs to the universal ribosomal protein uL5 family. Part of the 50S ribosomal subunit; part of the 5S rRNA/L5/L18/L25 subcomplex. Contacts the 5S rRNA and the P site tRNA. Forms a bridge to the 30S subunit in the 70S ribosome.

In terms of biological role, this is one of the proteins that bind and probably mediate the attachment of the 5S RNA into the large ribosomal subunit, where it forms part of the central protuberance. In the 70S ribosome it contacts protein S13 of the 30S subunit (bridge B1b), connecting the 2 subunits; this bridge is implicated in subunit movement. Contacts the P site tRNA; the 5S rRNA and some of its associated proteins might help stabilize positioning of ribosome-bound tRNAs. The sequence is that of Large ribosomal subunit protein uL5 from Marinomonas sp. (strain MWYL1).